The chain runs to 368 residues: MKDREIFAGLMSGTSLDGVDTALASFQGELPETIATSFTPFPSDLKYKLHHLAVADSWRPDELFAAESQLTLLYAEAINDLLQSADIDRSRIHAIGCHGQTIRHRPAINWPYTCQLGNPSLLAEKTGITVIADFRRRDIAAGGEGAPLAPAFHMHVLQHRFPNCAVVNIGGIANITQWSEKANAVVGFDCGPGNILMDAWCSQAFQQNCDHGGQIARTGSINHALLQEMKKEPFFSLSAPKSTGRELFNHDWLQANLQKTASVDDRDILATLTELTAQTICEALNTNTLTHLFVCGGGAHNLFLMERLSRHLPGILVKGTDSAGIDPDFMEAMAFAWLAMRTLARLPGNIPAVTRAQGERILGAIYPA.

13-20 (GTSLDGVD) serves as a coordination point for ATP.

This sequence belongs to the anhydro-N-acetylmuramic acid kinase family.

The enzyme catalyses 1,6-anhydro-N-acetyl-beta-muramate + ATP + H2O = N-acetyl-D-muramate 6-phosphate + ADP + H(+). The protein operates within amino-sugar metabolism; 1,6-anhydro-N-acetylmuramate degradation. It participates in cell wall biogenesis; peptidoglycan recycling. Catalyzes the specific phosphorylation of 1,6-anhydro-N-acetylmuramic acid (anhMurNAc) with the simultaneous cleavage of the 1,6-anhydro ring, generating MurNAc-6-P. Is required for the utilization of anhMurNAc either imported from the medium or derived from its own cell wall murein, and thus plays a role in cell wall recycling. The chain is Anhydro-N-acetylmuramic acid kinase from Hahella chejuensis (strain KCTC 2396).